A 229-amino-acid chain; its full sequence is MAALGHLAGEAAAVPGLGTPCASRRHRLSGPVSSAGNPSTVCLCPGQPTCSNADSRAHPLGDEGGTASKKQNKKKKTRNRASVANGGEKASEKLAPEEVPLSAEAQTQQLAQELAWCVEQLELGLKRQKPNPKQKEQAIGAIRTLRSKRTPLPRKRQLMHSLFGDYRAQMEAEWREALRALRAAAYSAQVQPVDGATRKKSQRVCRPRPIWRAKATLDLPDEEFKFNFF.

N-acetylalanine is present on Ala-2. At Arg-27 the chain carries Omega-N-methylarginine. The segment at 55-101 is disordered; it reads SRAHPLGDEGGTASKKQNKKKKTRNRASVANGGEKASEKLAPEEVPL. A compositionally biased stretch (basic residues) spans 70 to 79; it reads KQNKKKKTRN. Ser-82 carries the phosphoserine modification.

Belongs to the UPF0488 family.

The chain is UPF0488 protein C8orf33 homolog from Pongo abelii (Sumatran orangutan).